Consider the following 373-residue polypeptide: Chaperone protein DnaJ (373 aa).

The 66-residue stretch at 4 to 69 (SYYEILEITQ…EKRAIYDRYG (66 aa)) folds into the J domain. Residues 135–212 (GCKKNIDFTY…CKGLGYNESK (78 aa)) form a CR-type zinc finger. Positions 148, 151, 164, 167, 186, 189, 200, and 203 each coordinate Zn(2+). CXXCXGXG motif repeat units lie at residues 148-155 (CKTCNGTG), 164-171 (CPKCQGRG), 186-193 (CPDCQGIG), and 200-207 (CSDCKGLG).

Belongs to the DnaJ family. As to quaternary structure, homodimer. Requires Zn(2+) as cofactor.

It localises to the cytoplasm. Participates actively in the response to hyperosmotic and heat shock by preventing the aggregation of stress-denatured proteins and by disaggregating proteins, also in an autonomous, DnaK-independent fashion. Unfolded proteins bind initially to DnaJ; upon interaction with the DnaJ-bound protein, DnaK hydrolyzes its bound ATP, resulting in the formation of a stable complex. GrpE releases ADP from DnaK; ATP binding to DnaK triggers the release of the substrate protein, thus completing the reaction cycle. Several rounds of ATP-dependent interactions between DnaJ, DnaK and GrpE are required for fully efficient folding. Also involved, together with DnaK and GrpE, in the DNA replication of plasmids through activation of initiation proteins. The polypeptide is Chaperone protein DnaJ (Campylobacter jejuni (strain RM1221)).